Here is a 402-residue protein sequence, read N- to C-terminus: Deoxyguanosinetriphosphate triphosphohydrolase-like protein (402 aa).

Positions 69–217 (RLTHSLEVAQ…AAIADDIAYD (149 aa)) constitute an HD domain.

Belongs to the dGTPase family. Type 2 subfamily.

The chain is Deoxyguanosinetriphosphate triphosphohydrolase-like protein from Bradyrhizobium diazoefficiens (strain JCM 10833 / BCRC 13528 / IAM 13628 / NBRC 14792 / USDA 110).